The following is a 306-amino-acid chain: 4-hydroxy-3-methylbut-2-enyl diphosphate reductase 1 (306 aa).

[4Fe-4S] cluster is bound at residue Cys-10. Residues His-39 and His-72 each coordinate (2E)-4-hydroxy-3-methylbut-2-enyl diphosphate. Positions 39 and 72 each coordinate dimethylallyl diphosphate. Residues His-39 and His-72 each coordinate isopentenyl diphosphate. Cys-94 is a binding site for [4Fe-4S] cluster. A (2E)-4-hydroxy-3-methylbut-2-enyl diphosphate-binding site is contributed by His-122. His-122 serves as a coordination point for dimethylallyl diphosphate. His-122 provides a ligand contact to isopentenyl diphosphate. Residue Glu-124 is the Proton donor of the active site. Thr-162 contributes to the (2E)-4-hydroxy-3-methylbut-2-enyl diphosphate binding site. Cys-192 serves as a coordination point for [4Fe-4S] cluster. The (2E)-4-hydroxy-3-methylbut-2-enyl diphosphate site is built by Ser-220, Ser-221, Asn-222, and Ser-264. The dimethylallyl diphosphate site is built by Ser-220, Ser-221, Asn-222, and Ser-264. Positions 220, 221, 222, and 264 each coordinate isopentenyl diphosphate.

It belongs to the IspH family. [4Fe-4S] cluster is required as a cofactor.

It catalyses the reaction isopentenyl diphosphate + 2 oxidized [2Fe-2S]-[ferredoxin] + H2O = (2E)-4-hydroxy-3-methylbut-2-enyl diphosphate + 2 reduced [2Fe-2S]-[ferredoxin] + 2 H(+). It carries out the reaction dimethylallyl diphosphate + 2 oxidized [2Fe-2S]-[ferredoxin] + H2O = (2E)-4-hydroxy-3-methylbut-2-enyl diphosphate + 2 reduced [2Fe-2S]-[ferredoxin] + 2 H(+). It participates in isoprenoid biosynthesis; dimethylallyl diphosphate biosynthesis; dimethylallyl diphosphate from (2E)-4-hydroxy-3-methylbutenyl diphosphate: step 1/1. Its pathway is isoprenoid biosynthesis; isopentenyl diphosphate biosynthesis via DXP pathway; isopentenyl diphosphate from 1-deoxy-D-xylulose 5-phosphate: step 6/6. In terms of biological role, catalyzes the conversion of 1-hydroxy-2-methyl-2-(E)-butenyl 4-diphosphate (HMBPP) into a mixture of isopentenyl diphosphate (IPP) and dimethylallyl diphosphate (DMAPP). Acts in the terminal step of the DOXP/MEP pathway for isoprenoid precursor biosynthesis. This chain is 4-hydroxy-3-methylbut-2-enyl diphosphate reductase 1, found in Rhodopseudomonas palustris (strain ATCC BAA-98 / CGA009).